Consider the following 340-residue polypeptide: Ketol-acid reductoisomerase (NADP(+)) (340 aa).

Residues 1-182 form the KARI N-terminal Rossmann domain; that stretch reads MRVYYDRDCD…GGGRSGIIET (182 aa). NADP(+) is bound by residues 24–27, arginine 48, serine 51, serine 53, and 83–86; these read YGSQ and DELQ. Histidine 108 is a catalytic residue. Glycine 134 is a binding site for NADP(+). One can recognise a KARI C-terminal knotted domain in the interval 183–329; sequence NFRQECETDL…EKLRGMMPWI (147 aa). 4 residues coordinate Mg(2+): aspartate 191, glutamate 195, glutamate 227, and glutamate 231. Serine 252 contributes to the substrate binding site.

It belongs to the ketol-acid reductoisomerase family. It depends on Mg(2+) as a cofactor.

It catalyses the reaction (2R)-2,3-dihydroxy-3-methylbutanoate + NADP(+) = (2S)-2-acetolactate + NADPH + H(+). The catalysed reaction is (2R,3R)-2,3-dihydroxy-3-methylpentanoate + NADP(+) = (S)-2-ethyl-2-hydroxy-3-oxobutanoate + NADPH + H(+). It participates in amino-acid biosynthesis; L-isoleucine biosynthesis; L-isoleucine from 2-oxobutanoate: step 2/4. Its pathway is amino-acid biosynthesis; L-valine biosynthesis; L-valine from pyruvate: step 2/4. Its function is as follows. Involved in the biosynthesis of branched-chain amino acids (BCAA). Catalyzes an alkyl-migration followed by a ketol-acid reduction of (S)-2-acetolactate (S2AL) to yield (R)-2,3-dihydroxy-isovalerate. In the isomerase reaction, S2AL is rearranged via a Mg-dependent methyl migration to produce 3-hydroxy-3-methyl-2-ketobutyrate (HMKB). In the reductase reaction, this 2-ketoacid undergoes a metal-dependent reduction by NADPH to yield (R)-2,3-dihydroxy-isovalerate. This Cereibacter sphaeroides (strain ATCC 17023 / DSM 158 / JCM 6121 / CCUG 31486 / LMG 2827 / NBRC 12203 / NCIMB 8253 / ATH 2.4.1.) (Rhodobacter sphaeroides) protein is Ketol-acid reductoisomerase (NADP(+)).